A 718-amino-acid polypeptide reads, in one-letter code: MACKYSTLIDSSLYDREGLCPGIDLRRHVAGELEEVGAFRAQEDWRRLVGPLPKPYAGLLGPDFSFITGAVPECHPDRMEIVAYALEFGFMHDDVIDTDVNHASLDEVGHTLDQSRTGKIEDKGSDGKRQMVTQIIREMMAIDPERAMTVAKSWASGVRHSSRRKEDTNFKALEQYIPYRALDVGYMLWHGLVTFGCAITIPNEEEEEAKRLIIPALVQASLLNDLFSFEKEKNDANVQNAVLIVMNEHGCSEEEARDILKKRIRLECANYLRNVKETNARADVSDELKRYINVMQYTLSGNAAWSTNCPRYNGPTKFNELQLLRSEHGLAKYPSRWSQENRTSGLVEGDCHESKPNELKRKRNGVSVDDEMRTNGTNGAKKPAHVSQPSTDSIVLEDMVQLARTCDLPDLSDTVILQPYRYLTSLPSKGFRDQAIDSINKWLKVPPKSVKMIKDVVKMLHSASLMLDDLEDNSPLRRGKPSTHSIYGMAQTVNSATYQYITATDITAQLQNSETFHIFVEELQQLHVGQSYDLYWTHNTLCPTIAEYLKMVDMKTGGLFRMLTRMMIAESPVVDKVPNSDMNLFSCLIGRFFQIRDDYQNLASADYAKAKGFAEDLDEGKYSFTLIHCIQTLESKPELAGEMMQLRAFLMKRRHEGKLSQEAKQEVLVTMKKTESLQYTLSVLRELHSELEKEVENLEAKFGEENFTLRVMLELLKV.

Residues 1–320 (MACKYSTLID…RYNGPTKFNE (320 aa)) form a (7Z)-ophiobola-7,19-dien-3-ol synthase region. Mg(2+) contacts are provided by Asp-93 and Asp-97. Asp-93 serves as a coordination point for substrate. The short motif at 93–97 (DDVID) is the DDXXD 1 element. Residues 180 to 183 (RALD), Asn-224, 228 to 232 (SFEKE), and 311 to 312 (RY) contribute to the substrate site. The NSE/DTE motif lies at 224-232 (NDLFSFEKE). A geranylfarnesyl diphosphate synthase region spans residues 321-718 (LQLLRSEHGL…LRVMLELLKV (398 aa)). A disordered region spans residues 346-391 (LVEGDCHESKPNELKRKRNGVSVDDEMRTNGTNGAKKPAHVSQPST). Residues 349-359 (GDCHESKPNEL) are compositionally biased toward basic and acidic residues. Lys-429, Arg-432, and His-461 together coordinate isopentenyl diphosphate. 2 residues coordinate Mg(2+): Asp-468 and Asp-472. The DDXXD 2 signature appears at 468–472 (DDLED). Position 477 (Arg-477) interacts with dimethylallyl diphosphate. Isopentenyl diphosphate is bound at residue Arg-478. Residues Lys-555, Thr-556, Gln-594, Asn-601, Lys-611, and Lys-621 each contribute to the dimethylallyl diphosphate site.

This sequence in the N-terminal section; belongs to the terpene synthase family. It in the C-terminal section; belongs to the FPP/GGPP synthase family. It depends on Mg(2+) as a cofactor.

It carries out the reaction isopentenyl diphosphate + (2E,6E)-farnesyl diphosphate = (2E,6E,10E)-geranylgeranyl diphosphate + diphosphate. The catalysed reaction is isopentenyl diphosphate + (2E,6E,10E)-geranylgeranyl diphosphate = (2E,6E,10E,14E)-geranylfarnesyl diphosphate + diphosphate. The enzyme catalyses (2E,6E,10E,14E)-geranylfarnesyl diphosphate + H2O = ophiobolin F + diphosphate. It participates in secondary metabolite biosynthesis; terpenoid biosynthesis. Functionally, bifunctional sesterterpene synthase; part of the gene cluster that mediates the biosynthesis of the sesterterpenes ophiobolins, fungal phytotoxins with potential anti-cancer activities. The first step of the pathway is performed by the sesterterpene synthase oblA that possesses both prenyl transferase and terpene cyclase activity, converting isopentenyl diphosphate and dimethylallyl diphosphate into geranylfarnesyl diphosphate (GFPP) and further converting GFPP into ophiobolin F, respectively. Other sesterterpenoids (C(25) terpenoids) are found as minor products of oblA. It is expected that ophiobolin F is then oxidized to ophiobolin A via ophiobolin C and ophiobolin B intermediates by the combined action of the cytochrome P450 monooxygenase oblB and the FAD-dependent oxidoreductase oblC. Although oblB catalyzes multistep oxygenations at C5 and C21/C7 in a relatively efficient manner, it is unable to convert ophiobolin F to ophiobolin C and produces instead several unexpected derivatives. The sequence is that of Ophiobolin F synthase oblA from Aspergillus clavatus (strain ATCC 1007 / CBS 513.65 / DSM 816 / NCTC 3887 / NRRL 1 / QM 1276 / 107).